A 144-amino-acid polypeptide reads, in one-letter code: D-aminoacyl-tRNA deacylase (144 aa).

The Gly-cisPro motif, important for rejection of L-amino acids motif lies at 136–137; the sequence is GP.

Belongs to the DTD family. As to quaternary structure, homodimer.

The protein resides in the cytoplasm. It catalyses the reaction glycyl-tRNA(Ala) + H2O = tRNA(Ala) + glycine + H(+). It carries out the reaction a D-aminoacyl-tRNA + H2O = a tRNA + a D-alpha-amino acid + H(+). Its function is as follows. An aminoacyl-tRNA editing enzyme that deacylates mischarged D-aminoacyl-tRNAs. Also deacylates mischarged glycyl-tRNA(Ala), protecting cells against glycine mischarging by AlaRS. Acts via tRNA-based rather than protein-based catalysis; rejects L-amino acids rather than detecting D-amino acids in the active site. By recycling D-aminoacyl-tRNA to D-amino acids and free tRNA molecules, this enzyme counteracts the toxicity associated with the formation of D-aminoacyl-tRNA entities in vivo and helps enforce protein L-homochirality. The sequence is that of D-aminoacyl-tRNA deacylase from Actinobacillus succinogenes (strain ATCC 55618 / DSM 22257 / CCUG 43843 / 130Z).